Consider the following 327-residue polypeptide: Mitochondrial carnitine carrier (327 aa).

Over residues 1-11 (MSSDTSLSESS) the composition is skewed to low complexity. The tract at residues 1–29 (MSSDTSLSESSLLKEESGSLTKSRPPIKS) is disordered. The next 6 membrane-spanning stretches (helical) occupy residues 33–49 (RENI…GVCA), 107–123 (LGVT…YDVG), 141–162 (MGQM…TAPT), 196–212 (GSLA…ALYF), 244–260 (LAGG…VFPI), and 293–313 (FFPG…ATFL). 3 Solcar repeats span residues 33 to 126 (RENI…GKKL), 139 to 221 (LTMG…SKNY), and 237 to 321 (VNIL…THSL).

It belongs to the mitochondrial carrier (TC 2.A.29) family.

It is found in the mitochondrion inner membrane. Transports carnitine, acetylcarnitine, propionylcarnitine and to a much lower extent medium- and long-chain acylcarnitines. In Saccharomyces cerevisiae (strain ATCC 204508 / S288c) (Baker's yeast), this protein is Mitochondrial carnitine carrier (CRC1).